Reading from the N-terminus, the 362-residue chain is Transcription factor bHLH128 (362 aa).

The segment covering 1–16 (MYQSSSSTSSSSQRSS) has biased composition (low complexity). 4 disordered regions span residues 1-23 (MYQS…GGGL), 78-106 (SDST…SNKD), 120-140 (SQQH…YSLA), and 162-184 (LNQP…HSRL). Polar residues predominate over residues 78 to 96 (SDSTTCGVNNSSDGQKQLG). Positions 162-173 (LNQPTSDYSPQG) are enriched in polar residues. Ser-189 is modified (phosphoserine). In terms of domain architecture, bHLH spans 289-339 (CATHPRSIAERERRTRISGKLKKLQDLVPNMDKQTSYSDMLDLAVQHIKGL).

Homodimer.

Its subcellular location is the nucleus. This is Transcription factor bHLH128 (BHLH128) from Arabidopsis thaliana (Mouse-ear cress).